The following is a 380-amino-acid chain: MDAFKQQLEQLSAKNQYRSIPDLVHQGRYITRENRKMLNMSSNDYLGLASNENLRQSFLQQYGGNFPSFTSSSSRLLTGNFPIYTDLEELVAQRFQRESALLFNSGYHANIGILPALTTTKSLILADKLVHASMIDGIRLSQCEFFRYRHNDYEHLKNLLEKNVGKFDRTFIVTESVFSMDGDVADLKQLVQLKKQFPNTYLYVDEAHAVGVYGQNGLGIAERANVIADIDLLVGTFGKALASMGAYVVCDQILKECLINQMRPLIFSTALPPFNVAWTHFIFERLPQLSKERTHLEQLSAFLRQEVEHRTQIMPSQTCIVPYILGENEATLAKAKDLQEQGYYCLPIRPPTVPKNTSRIRLSLTADMTADEVRQFAVHL.

Substrate is bound at residue Arg18. 106-107 (GY) contributes to the pyridoxal 5'-phosphate binding site. His131 is a binding site for substrate. Residues Ser179, 205 to 208 (DEAH), and 236 to 239 (TFGK) contribute to the pyridoxal 5'-phosphate site. The residue at position 239 (Lys239) is an N6-(pyridoxal phosphate)lysine. Position 352 (Thr352) interacts with substrate.

It belongs to the class-II pyridoxal-phosphate-dependent aminotransferase family. BioF subfamily. In terms of assembly, homodimer. Pyridoxal 5'-phosphate is required as a cofactor.

It carries out the reaction 6-carboxyhexanoyl-[ACP] + L-alanine + H(+) = (8S)-8-amino-7-oxononanoate + holo-[ACP] + CO2. The protein operates within cofactor biosynthesis; biotin biosynthesis. Functionally, catalyzes the decarboxylative condensation of pimeloyl-[acyl-carrier protein] and L-alanine to produce 8-amino-7-oxononanoate (AON), [acyl-carrier protein], and carbon dioxide. The sequence is that of Putative 8-amino-7-oxononanoate synthase (bioF) from Haemophilus influenzae (strain ATCC 51907 / DSM 11121 / KW20 / Rd).